The chain runs to 149 residues: 3-dehydroquinate dehydratase (149 aa).

Tyrosine 26 acts as the Proton acceptor in catalysis. The substrate site is built by asparagine 77, histidine 83, and aspartate 90. Histidine 103 serves as the catalytic Proton donor. Substrate-binding positions include 104–105 (LS) and arginine 114.

Belongs to the type-II 3-dehydroquinase family. In terms of assembly, homododecamer.

The enzyme catalyses 3-dehydroquinate = 3-dehydroshikimate + H2O. It functions in the pathway metabolic intermediate biosynthesis; chorismate biosynthesis; chorismate from D-erythrose 4-phosphate and phosphoenolpyruvate: step 3/7. In terms of biological role, catalyzes a trans-dehydration via an enolate intermediate. This Aeromonas hydrophila subsp. hydrophila (strain ATCC 7966 / DSM 30187 / BCRC 13018 / CCUG 14551 / JCM 1027 / KCTC 2358 / NCIMB 9240 / NCTC 8049) protein is 3-dehydroquinate dehydratase.